The sequence spans 361 residues: Geranylgeranyl pyrophosphate synthase 3 (361 aa).

Residues 44-63 form a disordered region; the sequence is DSNGSKELAPNGAQSRVQKP. Isopentenyl diphosphate contacts are provided by K81, R84, and H113. Residues D120 and D124 each contribute to the Mg(2+) site. Residue R129 coordinates dimethylallyl diphosphate. R130 contacts isopentenyl diphosphate. K207, T208, and Q244 together coordinate dimethylallyl diphosphate. Residue D247 participates in Mg(2+) binding. The dimethylallyl diphosphate site is built by N251, K261, and K271.

This sequence belongs to the FPP/GGPP synthase family. Requires Mg(2+) as cofactor.

The enzyme catalyses isopentenyl diphosphate + dimethylallyl diphosphate = (2E)-geranyl diphosphate + diphosphate. It catalyses the reaction isopentenyl diphosphate + (2E)-geranyl diphosphate = (2E,6E)-farnesyl diphosphate + diphosphate. It carries out the reaction isopentenyl diphosphate + (2E,6E)-farnesyl diphosphate = (2E,6E,10E)-geranylgeranyl diphosphate + diphosphate. Functionally, geranylgeranyl pyrophosphate synthase; part of the gene cluster 25 that mediates the biosynthesis of an isoprenoid secondary metabolite. In Zymoseptoria tritici (strain CBS 115943 / IPO323) (Speckled leaf blotch fungus), this protein is Geranylgeranyl pyrophosphate synthase 3 (GGS3).